A 232-amino-acid polypeptide reads, in one-letter code: RNA chaperone ProQ (232 aa).

Residues 105-182 (EAKARVQAQR…REEQHTPVSD (78 aa)) are disordered. Residues 117-136 (QQAKKREAAATAGEKEDAPR) show a composition bias toward basic and acidic residues. Positions 137–146 (RERKPRPTTP) are enriched in basic residues. A compositionally biased stretch (basic and acidic residues) spans 147-177 (RRKEGAERKPRAQKPVEKAPKTVKAPREEQH).

It belongs to the ProQ family.

Its subcellular location is the cytoplasm. Its function is as follows. RNA chaperone with significant RNA binding, RNA strand exchange and RNA duplexing activities. May regulate ProP activity through an RNA-based, post-transcriptional mechanism. The protein is RNA chaperone ProQ of Escherichia coli (strain K12).